Here is a 142-residue protein sequence, read N- to C-terminus: Protein archease (142 aa).

Positions 12, 141, and 142 each coordinate Ca(2+).

It belongs to the archease family. In terms of assembly, in solution, exists as a monomer, trimer and hexamer. Oligomeric states form a tripartite complex with tRNA and PAB1947 methyltransferase.

Functionally, activates the tRNA-splicing ligase complex by facilitating the enzymatic turnover of catalytic subunit RtcB. Acts by promoting the guanylylation of RtcB, a key intermediate step in tRNA ligation. Can also alter the NTP specificity of RtcB such that ATP, dGTP or ITP is used efficiently. Chaperone or modulator of proteins involved in DNA or RNA processing. Protects the tRNA (cytosine-5-)-methyltransferase PAB1947 against aggregation and increases its specificity. In Pyrococcus abyssi (strain GE5 / Orsay), this protein is Protein archease.